An 893-amino-acid chain; its full sequence is Alanine--tRNA ligase (893 aa).

Zn(2+) contacts are provided by H574, H578, C678, and H682.

It belongs to the class-II aminoacyl-tRNA synthetase family. Zn(2+) serves as cofactor.

Its subcellular location is the cytoplasm. It carries out the reaction tRNA(Ala) + L-alanine + ATP = L-alanyl-tRNA(Ala) + AMP + diphosphate. In terms of biological role, catalyzes the attachment of alanine to tRNA(Ala) in a two-step reaction: alanine is first activated by ATP to form Ala-AMP and then transferred to the acceptor end of tRNA(Ala). Also edits incorrectly charged Ser-tRNA(Ala) and Gly-tRNA(Ala) via its editing domain. In Bifidobacterium longum (strain NCC 2705), this protein is Alanine--tRNA ligase.